Reading from the N-terminus, the 274-residue chain is tRNA pseudouridine synthase A (274 aa).

The active-site Nucleophile is Asp57. Tyr115 is a substrate binding site.

The protein belongs to the tRNA pseudouridine synthase TruA family. In terms of assembly, homodimer.

The catalysed reaction is uridine(38/39/40) in tRNA = pseudouridine(38/39/40) in tRNA. Functionally, formation of pseudouridine at positions 38, 39 and 40 in the anticodon stem and loop of transfer RNAs. This Frankia casuarinae (strain DSM 45818 / CECT 9043 / HFP020203 / CcI3) protein is tRNA pseudouridine synthase A.